The sequence spans 640 residues: 1,4-alpha-glucan branching enzyme GlgB (640 aa).

The active-site Nucleophile is the Asp318. Glu371 (proton donor) is an active-site residue.

The protein belongs to the glycosyl hydrolase 13 family. GlgB subfamily. Monomer.

The enzyme catalyses Transfers a segment of a (1-&gt;4)-alpha-D-glucan chain to a primary hydroxy group in a similar glucan chain.. Its pathway is glycan biosynthesis; glycogen biosynthesis. Catalyzes the formation of the alpha-1,6-glucosidic linkages in glycogen by scission of a 1,4-alpha-linked oligosaccharide from growing alpha-1,4-glucan chains and the subsequent attachment of the oligosaccharide to the alpha-1,6 position. In Francisella tularensis subsp. mediasiatica (strain FSC147), this protein is 1,4-alpha-glucan branching enzyme GlgB.